The chain runs to 250 residues: Histone H1.3 (250 aa).

Disordered stretches follow at residues 17–53 and 104–250; these read AASGEKKVSTKKAAATPKSKKSTAAPPSHPPTQQMVD and QTKG…ATKK. Residues 27–42 are compositionally biased toward low complexity; the sequence is KKAAATPKSKKSTAAP. The H15 domain maps to 44 to 118; it reads SHPPTQQMVD…GASGSFKLSR (75 aa). Residues 120 to 133 show a composition bias toward basic and acidic residues; it reads AKKDAKPKASAVEK. Residues 138-161 are compositionally biased toward low complexity; sequence VNASAAAATKRSSSTSTTKKAAGA. Positions 174-191 are enriched in basic and acidic residues; the sequence is KNVEKKKADKEKAKDAKK. Residues 192-234 are compositionally biased toward low complexity; the sequence is TGTIKAKLTTAKAKSSATKPKTPKPKTTSAKPKKVVSATTPKK. A compositionally biased stretch (basic residues) spans 235–250; that stretch reads TAVKKPKAKTASATKK.

Belongs to the histone H1/H5 family.

Its subcellular location is the nucleus. The protein resides in the chromosome. Its function is as follows. Histones H1 are necessary for the condensation of nucleosome chains into higher-order structures. In Drosophila virilis (Fruit fly), this protein is Histone H1.3 (His1.3).